Reading from the N-terminus, the 278-residue chain is Shikimate dehydrogenase (NADP(+)) (278 aa).

Residues 19-21 (SRS) and Thr66 each bind shikimate. The active-site Proton acceptor is the Lys70. Residues Asn91 and Asp106 each contribute to the shikimate site. NADP(+) is bound by residues 129–133 (GAGGA) and Phe221. Tyr223 contributes to the shikimate binding site. Gly242 contacts NADP(+).

The protein belongs to the shikimate dehydrogenase family. As to quaternary structure, homodimer.

The enzyme catalyses shikimate + NADP(+) = 3-dehydroshikimate + NADPH + H(+). It functions in the pathway metabolic intermediate biosynthesis; chorismate biosynthesis; chorismate from D-erythrose 4-phosphate and phosphoenolpyruvate: step 4/7. In terms of biological role, involved in the biosynthesis of the chorismate, which leads to the biosynthesis of aromatic amino acids. Catalyzes the reversible NADPH linked reduction of 3-dehydroshikimate (DHSA) to yield shikimate (SA). The protein is Shikimate dehydrogenase (NADP(+)) of Anaeromyxobacter dehalogenans (strain 2CP-C).